Consider the following 157-residue polypeptide: Putative gamma-glutamylcyclotransferase CG2811 (157 aa).

14-17 serves as a coordination point for substrate; the sequence is YGTL. The active-site Proton acceptor is the Glu-89.

This sequence belongs to the gamma-glutamylcyclotransferase family.

Its function is as follows. Putative gamma-glutamylcyclotransferase. This Drosophila melanogaster (Fruit fly) protein is Putative gamma-glutamylcyclotransferase CG2811.